We begin with the raw amino-acid sequence, 295 residues long: NAD kinase (295 aa).

D74 acts as the Proton acceptor in catalysis. Residues 74 to 75, 148 to 149, R176, D178, and 189 to 194 contribute to the NAD(+) site; these read DG, NE, and TAYAMS.

It belongs to the NAD kinase family. A divalent metal cation is required as a cofactor.

The protein resides in the cytoplasm. It carries out the reaction NAD(+) + ATP = ADP + NADP(+) + H(+). Its function is as follows. Involved in the regulation of the intracellular balance of NAD and NADP, and is a key enzyme in the biosynthesis of NADP. Catalyzes specifically the phosphorylation on 2'-hydroxyl of the adenosine moiety of NAD to yield NADP. In Acidithiobacillus ferrooxidans (strain ATCC 23270 / DSM 14882 / CIP 104768 / NCIMB 8455) (Ferrobacillus ferrooxidans (strain ATCC 23270)), this protein is NAD kinase.